The primary structure comprises 90 residues: Envelope protein US9 (90 aa).

The Intravirion portion of the chain corresponds to 1–67; sequence MTSRLSDPNS…RRRRTRCVGM (67 aa). Positions 21 to 24 match the Internalization motif motif; sequence YPTA. An acidic region spans residues 30 to 39; sequence EAYYSESEDE. A phosphoserine; by host CK2 mark is found at serine 34 and serine 36. A helical; Signal-anchor for type II membrane protein transmembrane segment spans residues 68-88; sequence VIACLLVAVLSGGFGALLMWL. Over 89-90 the chain is Virion surface; that stretch reads LR.

Belongs to the alphaherpesvirinae envelope protein US9 family. Phosphorylated on serines within the acidic cluster, possibly by host CK2. Phosphorylation determines whether endocytosed viral US9 traffics to the trans-Golgi network or recycles to the cell membrane.

It localises to the virion membrane. The protein localises to the host Golgi apparatus membrane. It is found in the host smooth endoplasmic reticulum membrane. Its subcellular location is the host cell membrane. Essential for the anterograde spread of the infection throughout the host nervous system. Together with the gE/gI heterodimer, US9 is involved in the sorting and transport of viral structural components toward axon tips. The chain is Envelope protein US9 from Homo sapiens (Human).